A 319-amino-acid polypeptide reads, in one-letter code: ATP-dependent 6-phosphofructokinase (319 aa).

Gly11 contacts ATP. 21–25 (RAVVR) provides a ligand contact to ADP. ATP is bound by residues 72 to 73 (RC) and 102 to 105 (GDGS). Residue Asp103 coordinates Mg(2+). 125 to 127 (TID) lines the substrate pocket. The active-site Proton acceptor is the Asp127. Arg154 contacts ADP. Substrate is bound by residues Arg162 and 169-171 (MGR). ADP is bound by residues 185 to 187 (GAE), Arg211, and 213 to 215 (KKH). Substrate contacts are provided by residues Glu222, Arg243, and 249-252 (HVQR).

It belongs to the phosphofructokinase type A (PFKA) family. ATP-dependent PFK group I subfamily. Prokaryotic clade 'B1' sub-subfamily. As to quaternary structure, homotetramer. Requires Mg(2+) as cofactor.

The protein localises to the cytoplasm. It catalyses the reaction beta-D-fructose 6-phosphate + ATP = beta-D-fructose 1,6-bisphosphate + ADP + H(+). It participates in carbohydrate degradation; glycolysis; D-glyceraldehyde 3-phosphate and glycerone phosphate from D-glucose: step 3/4. Allosterically activated by ADP and other diphosphonucleosides, and allosterically inhibited by phosphoenolpyruvate. Functionally, catalyzes the phosphorylation of D-fructose 6-phosphate to fructose 1,6-bisphosphate by ATP, the first committing step of glycolysis. This Bacillus cereus (strain B4264) protein is ATP-dependent 6-phosphofructokinase.